The primary structure comprises 367 residues: Probable glutamine synthetase (367 aa).

Residues 30–110 (IQATYVWIDG…VMCDTLDHQM (81 aa)) enclose the GS beta-grasp domain. The GS catalytic domain occupies 117–367 (HRQACAEIMH…TAMIAQSILF (251 aa)).

Belongs to the glutamine synthetase family. As to quaternary structure, homooctamer.

It localises to the cytoplasm. It catalyses the reaction L-glutamate + NH4(+) + ATP = L-glutamine + ADP + phosphate + H(+). The protein is Probable glutamine synthetase (gln-2) of Caenorhabditis elegans.